A 39-amino-acid chain; its full sequence is Potassium channel toxin alpha-KTx 2.23 (39 aa).

Disulfide bonds link Cys-7–Cys-29, Cys-13–Cys-34, and Cys-17–Cys-36.

Expressed by the venom gland.

It is found in the secreted. Functionally, blocks human voltage-gated potassium (Kv) channels Kv1.1/KCNA1, Kv1.2/KCNA2 and Kv1.3/KCNA3. The polypeptide is Potassium channel toxin alpha-KTx 2.23 (Centruroides bonito (Scorpion)).